A 250-amino-acid polypeptide reads, in one-letter code: Serine/arginine-rich splicing factor RS31A (250 aa).

RRM domains lie at 2-74 (RHVY…WAKD) and 95-166 (KTLF…YALR). A disordered region spans residues 170 to 250 (EREDRYAGSR…SRSPIQRARG (81 aa)). Basic residues predominate over residues 177 to 191 (GSRRRRSPSPVYRRR). Phosphoserine occurs at positions 183, 185, 201, 218, and 243. Residues 192 to 230 (PSPDYTRRRSPEYDRYKGPAPYERRKSPDYGRRSSDYGR) show a composition bias toward basic and acidic residues.

It belongs to the splicing factor SR family. RS subfamily. Component of the spliceosome. Interacts with MOS14.

It localises to the nucleus speckle. It is found in the nucleus. The protein localises to the nucleoplasm. Probably involved in intron recognition and spliceosome assembly. The sequence is that of Serine/arginine-rich splicing factor RS31A (RS31A) from Arabidopsis thaliana (Mouse-ear cress).